The sequence spans 473 residues: Cell division protein FtsP (473 aa).

Positions 1–27 (MSLSRRQFIQASGLAMCLGALPFAVQA) form a signal peptide, tat-type signal.

This sequence belongs to the FtsP family. Predicted to be exported by the Tat system. The position of the signal peptide cleavage has not been experimentally proven.

It is found in the periplasm. Functionally, cell division protein that is required for growth during stress conditions. May be involved in protecting or stabilizing the divisomal assembly under conditions of stress. The protein is Cell division protein FtsP of Xenorhabdus nematophila (strain ATCC 19061 / DSM 3370 / CCUG 14189 / LMG 1036 / NCIMB 9965 / AN6).